A 580-amino-acid chain; its full sequence is Glutamine--tRNA ligase (580 aa).

The 'HIGH' region motif lies at 41-51 (PEPNGYLHIGH). Residues 42 to 44 (EPN) and 48 to 54 (HIGHAKA) contribute to the ATP site. 2 residues coordinate L-glutamine: Asp74 and Tyr218. ATP contacts are provided by residues Thr237, 285-286 (RL), and 293-295 (MSK). The short motif at 292–296 (VMSKR) is the 'KMSKS' region element.

Belongs to the class-I aminoacyl-tRNA synthetase family. Monomer.

Its subcellular location is the cytoplasm. The catalysed reaction is tRNA(Gln) + L-glutamine + ATP = L-glutaminyl-tRNA(Gln) + AMP + diphosphate. In Xylella fastidiosa (strain Temecula1 / ATCC 700964), this protein is Glutamine--tRNA ligase.